We begin with the raw amino-acid sequence, 374 residues long: Type IV secretion system protein PtlG homolog (374 aa).

Residues 38–56 (WMFALVAVALSCLLATGIW) form a helical membrane-spanning segment. Residues 87 to 116 (PREPEPAPLPDMPAAPNPILPQPRPAPPVP) are disordered. Residues 92 to 116 (PAPLPDMPAAPNPILPQPRPAPPVP) show a composition bias toward pro residues.

It belongs to the TrbI/VirB10 family.

The protein localises to the cell membrane. This Bordetella parapertussis (strain 12822 / ATCC BAA-587 / NCTC 13253) protein is Type IV secretion system protein PtlG homolog (ptlG).